The chain runs to 188 residues: Elongation factor P (188 aa).

Belongs to the elongation factor P family.

The protein localises to the cytoplasm. It participates in protein biosynthesis; polypeptide chain elongation. Its function is as follows. Involved in peptide bond synthesis. Stimulates efficient translation and peptide-bond synthesis on native or reconstituted 70S ribosomes in vitro. Probably functions indirectly by altering the affinity of the ribosome for aminoacyl-tRNA, thus increasing their reactivity as acceptors for peptidyl transferase. The sequence is that of Elongation factor P from Rhodopseudomonas palustris (strain ATCC BAA-98 / CGA009).